We begin with the raw amino-acid sequence, 119 residues long: Host cell factor C1 regulator 1 (119 aa).

Residues 1 to 34 are disordered; the sequence is MILQQPLERGPQGRAQRDPRAASGASGGLDAREP. An interaction with HCFC1 region spans residues 57 to 60; sequence DHPY. A Nuclear export signal motif is present at residues 91 to 100; sequence IPEALRLLRL.

Interacts with HCFC1.

The protein resides in the cytoplasm. Its subcellular location is the nucleus. In terms of biological role, regulates HCFC1 activity by modulating its subcellular localization. Overexpression of HCFC1R1 leads to accumulation of HCFC1 in the cytoplasm. HCFC1R1-mediated export may provide the pool of cytoplasmic HCFC1 required for import of virion-derived VP16 into the nucleus. The polypeptide is Host cell factor C1 regulator 1 (HCFC1R1) (Bos taurus (Bovine)).